A 936-amino-acid chain; its full sequence is Protocadherin gamma-A10 (936 aa).

The N-terminal stretch at 1–32 (MAAQRNRSKESKDCSGLVLLCLFFGIPWEAGA) is a signal peptide. Cadherin domains follow at residues 33–137 (RQIS…APKF), 138–246 (QAEN…APVF), 247–351 (TLPE…SPEL), 352–456 (TITS…PPTF), 457–566 (SQVS…APEI), and 574–687 (DGST…SPAN). Over 33-696 (RQISYSIPEE…NSETSDLTLY (664 aa)) the chain is Extracellular. An N-linked (GlcNAc...) asparagine glycan is attached at asparagine 51. Asparagine 423 and asparagine 549 each carry an N-linked (GlcNAc...) asparagine glycan. The helical transmembrane segment at 697 to 717 (LVVAVAAVSCVFLAFVIVLLA) threads the bilayer. The Cytoplasmic segment spans residues 718–936 (HRLRRWHKSR…KKKSGKKEKK (219 aa)). 2 disordered regions span residues 806 to 845 (EDTPLVPQAPPNTDWRFSQAQRPGTSGSQNGDDTGTWPNN) and 906 to 936 (ATLTNAAGKRDGKAPAGGNGNKKKSGKKEKK). The span at 820–845 (WRFSQAQRPGTSGSQNGDDTGTWPNN) shows a compositional bias: polar residues. The segment covering 926–936 (NKKKSGKKEKK) has biased composition (basic residues).

Its subcellular location is the cell membrane. Functionally, potential calcium-dependent cell-adhesion protein. May be involved in the establishment and maintenance of specific neuronal connections in the brain. The chain is Protocadherin gamma-A10 (PCDHGA10) from Homo sapiens (Human).